The sequence spans 493 residues: Adenylyltransferase and sulfurtransferase uba4 (493 aa).

ATP is bound by residues Gly-99, Asp-120, 127-131 (SNLHR), Lys-144, and 188-189 (DN). Zn(2+) contacts are provided by Cys-237 and Cys-240. Catalysis depends on Cys-254, which acts as the Glycyl thioester intermediate; for adenylyltransferase activity. Zn(2+)-binding residues include Cys-316 and Cys-319. A Rhodanese domain is found at 376–491 (INKEPTIIDV…WREQIDPDWP (116 aa)). Residue Cys-446 is the Cysteine persulfide intermediate; for sulfurtransferase activity of the active site.

It in the N-terminal section; belongs to the HesA/MoeB/ThiF family. UBA4 subfamily. The cofactor is Zn(2+).

The protein localises to the cytoplasm. Its subcellular location is the cytosol. It carries out the reaction [molybdopterin-synthase sulfur-carrier protein]-C-terminal Gly-Gly + ATP + H(+) = [molybdopterin-synthase sulfur-carrier protein]-C-terminal Gly-Gly-AMP + diphosphate. The enzyme catalyses [molybdopterin-synthase sulfur-carrier protein]-C-terminal Gly-Gly-AMP + S-sulfanyl-L-cysteinyl-[cysteine desulfurase] + AH2 = [molybdopterin-synthase sulfur-carrier protein]-C-terminal-Gly-aminoethanethioate + L-cysteinyl-[cysteine desulfurase] + A + AMP + 2 H(+). It participates in tRNA modification; 5-methoxycarbonylmethyl-2-thiouridine-tRNA biosynthesis. The protein operates within cofactor biosynthesis; molybdopterin biosynthesis. Plays a central role in 2-thiolation of mcm(5)S(2)U at tRNA wobble positions of cytosolic tRNA(Lys), tRNA(Glu) and tRNA(Gln). Also essential during biosynthesis of the molybdenum cofactor. Acts by mediating the C-terminal thiocarboxylation of sulfur carriers urm1 and mocs2a. Its N-terminus first activates urm1 and mocs2a as acyl-adenylates (-COAMP), then the persulfide sulfur on the catalytic cysteine is transferred to urm1 and mocs2a to form thiocarboxylation (-COSH) of their C-terminus. The reaction probably involves hydrogen sulfide that is generated from the persulfide intermediate and that acts as a nucleophile towards urm1 and mocs2a. Subsequently, a transient disulfide bond is formed. Does not use thiosulfate as sulfur donor; nfs1 probably acting as a sulfur donor for thiocarboxylation reactions. The polypeptide is Adenylyltransferase and sulfurtransferase uba4 (Aspergillus fumigatus (strain ATCC MYA-4609 / CBS 101355 / FGSC A1100 / Af293) (Neosartorya fumigata)).